Consider the following 62-residue polypeptide: Large ribosomal subunit protein bL28 (62 aa).

This sequence belongs to the bacterial ribosomal protein bL28 family.

In Syntrophomonas wolfei subsp. wolfei (strain DSM 2245B / Goettingen), this protein is Large ribosomal subunit protein bL28.